The sequence spans 231 residues: Probable glutathione S-transferase (231 aa).

Residues 4–96 (PNFELYGYFR…YLEEALPTNA (93 aa)) enclose the GST N-terminal domain. Residues S14, Q43, V57, 80-81 (QS), Q124, and 128-130 (NLK) contribute to the glutathione site. Residues 105–227 (NPVARAHVRT…HWQKQEDTPE (123 aa)) form the GST C-terminal domain.

The protein belongs to the GST superfamily. Zeta family. Homodimer.

The catalysed reaction is RX + glutathione = an S-substituted glutathione + a halide anion + H(+). In terms of biological role, probable glutathione S-transferase. The polypeptide is Probable glutathione S-transferase (Coccidioides immitis (strain RS) (Valley fever fungus)).